A 659-amino-acid chain; its full sequence is Interferon-induced GTP-binding protein Mx2 (659 aa).

The region spanning 65–338 (DLALPAIAVI…LISHICKSLP (274 aa)) is the Dynamin-type G domain. The interval 75–82 (GDQSSGKS) is G1 motif. 75 to 82 (GDQSSGKS) contributes to the GTP binding site. The G2 motif stretch occupies residues 100-102 (VTR). The interval 176–179 (DLPG) is G3 motif. Residues 176 to 180 (DLPGI) and 245 to 248 (TKPD) contribute to the GTP site. Positions 245–248 (TKPD) are G4 motif. The G5 motif stretch occupies residues 277-280 (KCRG). The segment at 547 to 567 (EAEEEERKHGKSRSSQSKNLQ) is disordered. In terms of domain architecture, GED spans 571 to 659 (MDEIFQHLNA…AQRRLAKFPG (89 aa)).

The protein belongs to the TRAFAC class dynamin-like GTPase superfamily. Dynamin/Fzo/YdjA family.

Its subcellular location is the cytoplasm. Its function is as follows. Interferon-induced dynamin-like GTPase with antiviral activity against vesicular stomatitis virus (VSV). The protein is Interferon-induced GTP-binding protein Mx2 (Mx2) of Rattus norvegicus (Rat).